Here is a 171-residue protein sequence, read N- to C-terminus: Peptide deformylase (171 aa).

Fe cation-binding residues include cysteine 92 and histidine 134. The active site involves glutamate 135. Residue histidine 138 participates in Fe cation binding.

This sequence belongs to the polypeptide deformylase family. Fe(2+) is required as a cofactor.

The enzyme catalyses N-terminal N-formyl-L-methionyl-[peptide] + H2O = N-terminal L-methionyl-[peptide] + formate. In terms of biological role, removes the formyl group from the N-terminal Met of newly synthesized proteins. Requires at least a dipeptide for an efficient rate of reaction. N-terminal L-methionine is a prerequisite for activity but the enzyme has broad specificity at other positions. The chain is Peptide deformylase from Polynucleobacter necessarius subsp. necessarius (strain STIR1).